The primary structure comprises 1520 residues: Integrator complex subunit 3 homolog (1520 aa).

6 disordered regions span residues 1–23 (MMNQ…QQLT), 523–671 (QLHS…NSRV), 689–801 (VISQ…SPST), 813–922 (DEPP…QNIK), 1116–1177 (FSNS…NITN), and 1489–1520 (QSSN…FRKE). Low complexity-rich tracts occupy residues 527 to 549 (QQQQ…QQPP) and 557 to 595 (QPIN…QQQP). A compositionally biased stretch (pro residues) spans 596–612 (PQQPPPQQQPQQQPPQQ). A compositionally biased stretch (low complexity) spans 613–625 (QPQQQPQQQQPQL). The segment covering 626–639 (NISTGNLPNIQQPM) has biased composition (polar residues). Low complexity-rich tracts occupy residues 642–669 (SPPL…TNNS), 694–717 (PQSQ…SPPL), and 725–735 (QQQPSQQLPSQ). A compositionally biased stretch (polar residues) spans 736-752 (IVKNSPPNLSMTNENIS). Residues 768 to 789 (SPLINSSNSNITTPNPDSQSQI) show a composition bias toward low complexity. Residues 819–828 (SKSSPTQSNI) are compositionally biased toward polar residues. Residues 837-882 (PPQTTISSSSPLLQPQTQPQPQTQPQPQTLQQSTTPSLSSSSTPTI) show a composition bias toward low complexity. Pro residues predominate over residues 898-918 (QPPPPPPSSQPLQPPPPPPPS). 2 stretches are compositionally biased toward low complexity: residues 1116 to 1130 (FSNS…NNNN) and 1137 to 1177 (QQQQ…NITN). Residues 1489–1504 (QSSNIKNDNNPTLSKH) are compositionally biased toward polar residues.

Belongs to the Integrator subunit 3 family. In terms of assembly, component of the Integrator complex. The core complex associates with protein phosphatase 2A subunits, to form the Integrator-PP2A (INTAC) complex. Component of the SOSS complex.

The protein resides in the nucleus. It localises to the cytoplasm. Its function is as follows. Component of the integrator complex, a multiprotein complex that terminates RNA polymerase II (Pol II) transcription in the promoter-proximal region of genes. The integrator complex provides a quality checkpoint during transcription elongation by driving premature transcription termination of transcripts that are unfavorably configured for transcriptional elongation: the complex terminates transcription by (1) catalyzing dephosphorylation of the C-terminal domain (CTD) of Pol II subunit polr2a, (2) degrading the exiting nascent RNA transcript via endonuclease activity and (3) promoting the release of Pol II from bound DNA. The integrator complex is also involved in terminating the synthesis of non-coding Pol II transcripts, such as enhancer RNAs (eRNAs), small nuclear RNAs (snRNAs), telomerase RNAs and long non-coding RNAs (lncRNAs). Component of the SOSS complex, a multiprotein complex that functions downstream of the MRN complex to promote DNA repair and G2/M checkpoint. The SOSS complex associates with single-stranded DNA at DNA lesions and influences diverse endpoints in the cellular DNA damage response including cell-cycle checkpoint activation, recombinational repair and maintenance of genomic stability. The SOSS complex is required for efficient homologous recombination-dependent repair of double-strand breaks (DSBs) and ATM-dependent signaling pathways. In the SOSS complex, it is required for the assembly of the complex and for stabilization of the complex at DNA damage sites. In Dictyostelium discoideum (Social amoeba), this protein is Integrator complex subunit 3 homolog (ints3).